Consider the following 465-residue polypeptide: Solute carrier family 7 member 12 (465 aa).

At 1 to 6 (MQLLRA) the chain is on the cytoplasmic side. A helical transmembrane segment spans residues 7 to 27 (LGVFHVSMILFSATLGTGIFV). Topologically, residues 28–39 (TPKAVLKYSSLN) are extracellular. A helical membrane pass occupies residues 40–60 (IPVSLSIWAGCGLLSIMSALC). The Cytoplasmic segment spans residues 61–81 (NAEIATTYPLSGASYYFLKRT). Residues 82 to 102 (LGSSVAFLSLWIKLFAHFLGI) form a helical membrane-spanning segment. Residues 103-132 (GAQCLLIATSVIQCFYSGCPAPELPTKCLA) are Extracellular-facing. Residues 133-153 (LAILWSFGIVSARGIKTVAWF) traverse the membrane as a helical segment. Asn154 is a topological domain (cytoplasmic). A helical transmembrane segment spans residues 155 to 175 (TVSSFIKLSVLCLISLTVLLV). The Extracellular segment spans residues 176–202 (NGKKENVSRFENALDAELPNASQIADA). A helical membrane pass occupies residues 203–223 (ILQVSYSYLGSSVLIVIAGEI). Over 224–234 (KRPTETIPKTL) the chain is Cytoplasmic. Residues 235 to 255 (IYGISIVTVLYLLTNISYLAV) traverse the membrane as a helical segment. Residues 256–280 (LTSQEIIFSDSVGVTWMNRVFPSIQ) lie on the Extracellular side of the membrane. Residues 281–301 (WISSFLISAFLLGSVSCGIVS) form a helical membrane-spanning segment. Topologically, residues 302–327 (ASRVFYSASQEGEFPSIYSMLNDHHS) are cytoplasmic. The helical transmembrane segment at 328–351 (PAVADIQIVILSSVAIISSSIIYL) threads the bilayer. Over 352 to 356 (VKYVS) the chain is Extracellular. A helical transmembrane segment spans residues 357 to 375 (LGSFCINLLQMIGLLKIRY). Residues 376 to 386 (QNPDIPRPYKV) are Cytoplasmic-facing. Residues 387 to 407 (WLPFIFGSIALSLFLIFTPVI) traverse the membrane as a helical segment. Topologically, residues 408 to 409 (QS) are extracellular. The chain crosses the membrane as a helical span at residues 410-430 (PSIEHVYQVVFLFCGFLCYWL). Residues 431 to 465 (QANLNGHATCFDTITCYCQLLFNISPSEDPEEQKN) are Cytoplasmic-facing.

It belongs to the amino acid-polyamine-organocation (APC) superfamily. As to quaternary structure, probably forms multimers, perhaps with an unknown protein(s). Expressed in kidney and red blood cells (at protein level). Expressed in kidney along the collecting ducts in the cortex, outer and inner medulla. May be expressed in placenta, lungs, spleen and skeletal muscles.

It localises to the apical cell membrane. The protein localises to the basal cell membrane. It is found in the cytoplasm. Functionally, probably mediates sodium- and chloride-independent uptake of neutral amino acids. The chain is Solute carrier family 7 member 12 from Mus musculus (Mouse).